Here is a 469-residue protein sequence, read N- to C-terminus: E3 ubiquitin-protein ligase TRIM21 (469 aa).

The segment at 16–55 adopts an RING-type zinc-finger fold; sequence CSICLDPMVEPMSIECGHSFCQECISEVGKEGGSVCPVCR. Residues 87 to 128 form a B box-type zinc finger; the sequence is PHGELCVVHREKIHLFCEEDGKALCWVCSQSQKHRDHPMVPI. Zn(2+) is bound by residues cysteine 92, histidine 95, cysteine 114, and histidine 120. Residues 128–245 are a coiled coil; that stretch reads IEEAAQEYQE…RRGSALELLQ (118 aa). Serine 266 carries the phosphoserine modification. Positions 268–467 constitute a B30.2/SPRY domain; the sequence is DLRNVFYVPG…APLILCPLKT (200 aa).

Belongs to the TRIM/RBCC family. In terms of assembly, homotrimer. Interacts (via C-terminus) with IRF8 (via C-terminus). Component of a SCF(SKP2)-like complex containing CUL1, SKP1, TRIM21 and SKP2. Interacts with CALR, CUL1, FBXW11, HSPA5, IKBKB, IRF3, SKP1 and VCP. Interacts with SKP2; the interaction with SKP2 does not depend on an intact F-box domain. Interacts (via N-terminus and C-terminus) with DCP2 (via N-terminus and C-terminus). Interacts with ULK1, BECN1 and with ATG8 family members, including GABARAP, GABARAPL1, GABARAPL2 and MAP1LC3C/LC3C. Interacts with TRIM21 and SQSTM1/sequestosome 1. Interacts with IRF3. Interacts (via the SPRY domain) with NMI (via coiled-coil domain); the interaction promotes 'Lys-63'-linked ubiquitination of NMI. Interacts with IFI35 and NMI; the interaction facilitates NMI-IFI35 complex formation. Autoubiquitinated; does not lead to its proteasomal degradation. Deubiquitinated by USP4; leading to its stabilization.

Its subcellular location is the cytoplasm. The protein localises to the cytoplasmic vesicle. The protein resides in the autophagosome. It localises to the nucleus. It is found in the P-body. Its subcellular location is the stress granule. The catalysed reaction is S-ubiquitinyl-[E2 ubiquitin-conjugating enzyme]-L-cysteine + [acceptor protein]-L-lysine = [E2 ubiquitin-conjugating enzyme]-L-cysteine + N(6)-ubiquitinyl-[acceptor protein]-L-lysine.. The protein operates within protein modification; protein ubiquitination. In terms of biological role, E3 ubiquitin-protein ligase whose activity is dependent on E2 enzymes, UBE2D1, UBE2D2, UBE2E1 and UBE2E2. Forms a ubiquitin ligase complex in cooperation with the E2 UBE2D2 that is used not only for the ubiquitination of USP4 and IKBKB but also for its self-ubiquitination. Component of cullin-RING-based SCF (SKP1-CUL1-F-box protein) E3 ubiquitin-protein ligase complexes such as SCF(SKP2)-like complexes. A TRIM21-containing SCF(SKP2)-like complex is shown to mediate ubiquitination of CDKN1B ('Thr-187' phosphorylated-form), thereby promoting its degradation by the proteasome. Monoubiquitinates IKBKB that will negatively regulates Tax-induced NF-kappa-B signaling. Negatively regulates IFN-beta production post-pathogen recognition by catalyzing polyubiquitin-mediated degradation of IRF3. Mediates the ubiquitin-mediated proteasomal degradation of IgG1 heavy chain, which is linked to the VCP-mediated ER-associated degradation (ERAD) pathway. Promotes IRF8 ubiquitination, which enhanced the ability of IRF8 to stimulate cytokine genes transcription in macrophages. Plays a role in the regulation of the cell cycle progression. Enhances the decapping activity of DCP2. Exists as a ribonucleoprotein particle present in all mammalian cells studied and composed of a single polypeptide and one of four small RNA molecules. At least two isoforms are present in nucleated and red blood cells, and tissue specific differences in RO/SSA proteins have been identified. The common feature of these proteins is their ability to bind HY RNAs.2. Involved in the regulation of innate immunity and the inflammatory response in response to IFNG/IFN-gamma. Organizes autophagic machinery by serving as a platform for the assembly of ULK1, Beclin 1/BECN1 and ATG8 family members and recognizes specific autophagy targets, thus coordinating target recognition with assembly of the autophagic apparatus and initiation of autophagy. Also regulates autophagy through FIP200/RB1CC1 ubiquitination and subsequent decreased protein stability. Represses the innate antiviral response by facilitating the formation of the NMI-IFI35 complex through 'Lys-63'-linked ubiquitination of NMI. During viral infection, promotes cell pyroptosis by mediating 'Lys-6'-linked ubiquitination of ISG12a/IFI27, facilitating its translocation into the mitochondria and subsequent CASP3 activation. When up-regulated through the IFN/JAK/STAT signaling pathway, promotes 'Lys-27'-linked ubiquitination of MAVS, leading to the recruitment of TBK1 and up-regulation of innate immunity. Mediates 'Lys-63'-linked polyubiquitination of G3BP1 in response to heat shock, leading to stress granule disassembly. The chain is E3 ubiquitin-protein ligase TRIM21 (TRIM21) from Bos taurus (Bovine).